Reading from the N-terminus, the 333-residue chain is Photosystem II assembly lipoprotein Ycf48 (333 aa).

Positions 1-23 are cleaved as a signal peptide; the sequence is MTRFVSSAINLLLVLVLGVSLSG. A lipid anchor (N-palmitoyl cysteine) is attached at Cys24. Cys24 is lipidated: S-diacylglycerol cysteine.

It belongs to the Ycf48 family. As to quaternary structure, part of early PSII assembly complexes which includes D1 (psbA) and PsbI; not found in mature PSII. Binds to the lumenal side of PSII complexes. Interacts with YidC.

The protein localises to the cellular thylakoid membrane. In terms of biological role, a factor required for optimal assembly of photosystem II (PSII), acting in the early stages of PSII assembly. Also plays a role in replacement of photodamaged D1 (psbA). Assists YidC in synthesis of chlorophyll-binding proteins. The protein is Photosystem II assembly lipoprotein Ycf48 of Parasynechococcus marenigrum (strain WH8102).